The chain runs to 134 residues: Large ribosomal subunit protein bL19 (134 aa).

Residues 108-134 form a disordered region; sequence KSARIVERSDRSDKAKAQKAAAATAAE. The segment covering 111-123 has biased composition (basic and acidic residues); sequence RIVERSDRSDKAK. Over residues 125–134 the composition is skewed to low complexity; sequence QKAAAATAAE.

This sequence belongs to the bacterial ribosomal protein bL19 family.

Its function is as follows. This protein is located at the 30S-50S ribosomal subunit interface and may play a role in the structure and function of the aminoacyl-tRNA binding site. The polypeptide is Large ribosomal subunit protein bL19 (Methylorubrum extorquens (strain PA1) (Methylobacterium extorquens)).